The following is a 460-amino-acid chain: tRNA(Ile)-lysidine synthase (460 aa).

37 to 42 serves as a coordination point for ATP; it reads SGGADS.

This sequence belongs to the tRNA(Ile)-lysidine synthase family.

The protein resides in the cytoplasm. It catalyses the reaction cytidine(34) in tRNA(Ile2) + L-lysine + ATP = lysidine(34) in tRNA(Ile2) + AMP + diphosphate + H(+). Ligates lysine onto the cytidine present at position 34 of the AUA codon-specific tRNA(Ile) that contains the anticodon CAU, in an ATP-dependent manner. Cytidine is converted to lysidine, thus changing the amino acid specificity of the tRNA from methionine to isoleucine. In Treponema denticola (strain ATCC 35405 / DSM 14222 / CIP 103919 / JCM 8153 / KCTC 15104), this protein is tRNA(Ile)-lysidine synthase.